We begin with the raw amino-acid sequence, 792 residues long: Ribonucleoside-diphosphate reductase large subunit (792 aa).

Substrate contacts are provided by residues Thr200, 215–216 (SC), Gly246, 415–419 (NLCAE), and 606–610 (PTAGT). A disulfide bridge connects residues Cys216 and Cys431. The active-site Proton acceptor is Asn415. Cys417 serves as the catalytic Cysteine radical intermediate. The Proton acceptor role is filled by Glu419. The interval 758–781 (SPPHSGMKQDGAWLPGPKNPEEES) is disordered.

The protein belongs to the ribonucleoside diphosphate reductase large chain family. In terms of assembly, heterotetramer composed of a homodimer of the large subunit (R1) and a homodimer of the small subunit (R2). Larger multisubunit protein complex are also active, composed of (R1)n(R2)n.

It carries out the reaction a 2'-deoxyribonucleoside 5'-diphosphate + [thioredoxin]-disulfide + H2O = a ribonucleoside 5'-diphosphate + [thioredoxin]-dithiol. Ribonucleoside-diphosphate reductase holoenzyme provides the precursors necessary for viral DNA synthesis. Allows virus growth in non-dividing cells, as well as reactivation from latency in infected hosts. Catalyzes the biosynthesis of deoxyribonucleotides from the corresponding ribonucleotides. This is Ribonucleoside-diphosphate reductase large subunit from Human herpesvirus 8 type P (isolate GK18) (HHV-8).